A 686-amino-acid polypeptide reads, in one-letter code: Terminal beta-(1-&gt;2)-arabinofuranosyltransferase (686 aa).

Residues methionine 1 to serine 42 are disordered. The segment covering proline 8–aspartate 25 has biased composition (basic and acidic residues). Positions glutamate 29–serine 42 are enriched in polar residues. 10 consecutive transmembrane segments (helical) span residues threonine 48–tryptophan 68, isoleucine 127–threonine 147, isoleucine 155–phenylalanine 175, leucine 180–alanine 200, isoleucine 219–valine 239, tryptophan 261–phenylalanine 281, glycine 316–tryptophan 336, threonine 353–isoleucine 373, methionine 384–valine 404, and leucine 411–glycine 431.

It belongs to the AftB family.

Its subcellular location is the membrane. It participates in cell wall biogenesis; cell wall polysaccharide biosynthesis. Its function is as follows. Involved in the biosynthesis of the arabinogalactan (AG) region of the mycolylarabinogalactan-peptidoglycan (mAGP) complex, an essential component of the cell wall. Catalyzes the transfer of arabinofuranosyl (Araf) residues from the sugar donor decaprenyl-phospho-arabinose (DPA) to the arabinan domain to form terminal beta-(1-&gt;2)-linked Araf residues, which marks the end point for AG arabinan biosynthesis before decoration with mycolic acids. This chain is Terminal beta-(1-&gt;2)-arabinofuranosyltransferase (aftB), found in Corynebacterium glutamicum (strain ATCC 13032 / DSM 20300 / JCM 1318 / BCRC 11384 / CCUG 27702 / LMG 3730 / NBRC 12168 / NCIMB 10025 / NRRL B-2784 / 534).